We begin with the raw amino-acid sequence, 242 residues long: UPF0246 protein SPN23F15130 (242 aa).

The protein belongs to the UPF0246 family.

The polypeptide is UPF0246 protein SPN23F15130 (Streptococcus pneumoniae (strain ATCC 700669 / Spain 23F-1)).